The chain runs to 240 residues: Histidinol dehydrogenase homolog oryD (240 aa).

Zn(2+) contacts are provided by Q64 and H67. The Proton acceptor role is filled by E134. Positions 168 and 228 each coordinate Zn(2+).

This sequence belongs to the histidinol dehydrogenase family. The cofactor is Zn(2+).

It functions in the pathway secondary metabolite biosynthesis. Its function is as follows. Histidinol dehydrogenase homolog; part of the gene cluster that mediates the biosynthesis of oryzines, natural products with an unusual maleidride backbone. The two subunits of the fungal fatty acid synthase oryfasA and oryfasB probably form octenoic acid. This fatty acid is most likely activated by the acyl-CoA ligase oryP to give octenyl-CoA before the citrate synthase-like protein oryE catalyzes condensation with oxaloacetate to form tricarboxylic acid. The next steps of the pathways are conjectural, but a favorite possible route has been proposed, beginning with decarboxylation and concomitant dehydration by the decarboxylase oryM, followed by tautomerization, which may lead to the production of a diene intermediate. Reduction of this diene intermediate could give the known metabolite piliformic acid. On the pathway to oryzine B and oryzine A, however, hydroxylation of the diene by the alpha-ketoglutarate-dependent dioxygenase oryG and lactonisation by the lactonohydrolases oryH or oryL could give oryzine B directly. Finally, enoyl reduction by the dehydrogenase oryD would then convert oryzine B into oryzine A. This is Histidinol dehydrogenase homolog oryD from Aspergillus oryzae (strain ATCC 42149 / RIB 40) (Yellow koji mold).